The following is a 908-amino-acid chain: Protein translocase subunit SecA (908 aa).

ATP is bound by residues Gln87, 105 to 109 (GEGKT), and Asp512. The segment at 865-908 (GGDDGSDEMMAHTPMIRDGDKVGRNDPCPCGSGRKYKQCHGKLS) is disordered. Residues 879–888 (MIRDGDKVGR) show a composition bias toward basic and acidic residues. Residues Cys892, Cys894, Cys903, and His904 each contribute to the Zn(2+) site. Over residues 898-908 (RKYKQCHGKLS) the composition is skewed to basic residues.

The protein belongs to the SecA family. As to quaternary structure, monomer and homodimer. Part of the essential Sec protein translocation apparatus which comprises SecA, SecYEG and auxiliary proteins SecDF-YajC and YidC. Requires Zn(2+) as cofactor.

The protein localises to the cell inner membrane. Its subcellular location is the cytoplasm. The catalysed reaction is ATP + H2O + cellular proteinSide 1 = ADP + phosphate + cellular proteinSide 2.. Functionally, part of the Sec protein translocase complex. Interacts with the SecYEG preprotein conducting channel. Has a central role in coupling the hydrolysis of ATP to the transfer of proteins into and across the cell membrane, serving both as a receptor for the preprotein-SecB complex and as an ATP-driven molecular motor driving the stepwise translocation of polypeptide chains across the membrane. This Shewanella sp. (strain MR-7) protein is Protein translocase subunit SecA.